A 419-amino-acid chain; its full sequence is WD repeat-containing protein JIP5 (419 aa).

WD repeat units lie at residues 4 to 45, 66 to 105, 108 to 147, 180 to 220, 224 to 263, 268 to 308, and 351 to 390; these read ALSS…HNQS, PSHKSCRGVAFDASGSNLFCIFKDKSIIALDPSDGHVKAR, RAHESAPSRILPIHEGLMATGDDDGIVRLWDPRCPPEGDA, DQED…KGVE, DQEDELLSIASIKNGKKLVVGTQLGVLSLWAPDRGLLDHA, GHPS…GIVG, and DAAEPEPAVMLVSDEAHLIARSADGSDESAGESDVMQPPP. The tract at residues 172–192 is disordered; sequence DPPRSKKKDQEDDLKRKRDEE. The segment at 372–408 is disordered; sequence SADGSDESAGESDVMQPPPATKRRTAKSKAGKKSVHD. The span at 392-404 shows a compositional bias: basic residues; it reads TKRRTAKSKAGKK.

This sequence belongs to the WD repeat WDR55 family.

It is found in the nucleus. The protein localises to the nucleolus. This chain is WD repeat-containing protein JIP5 (JIP5), found in Malassezia globosa (strain ATCC MYA-4612 / CBS 7966) (Dandruff-associated fungus).